Consider the following 719-residue polypeptide: MTEKVKQSAAVTGSDEIDIGRLVGTVIEARWWVLGTTAIFALCAVIYTFFATPIYSADALVQIEQNAGNSLVQDINSALANKPPASDAEIQLIRSRLVLGKTVDDLDLDIAVTKNTFPLFGAGWERLMGRHNEMVKVTTFTRPETMSGQIFTLKVLGDKRYQLVSDGGFSAQGVVGQPLNKDGVTMRVEAIDARPDTEFTVSKFSTLGMINNLQNNLTVTETGKDTGVLNLTFTGEDRDQIRDILNSITRNYLQQDIAWKSEEAGKSLAFLAKQLPEVRSRLDVAENKLNAFRQDKDSVDLPLEAKAVLDSMVNIDAQLNELTFKEAEISKLFTKAHPAYRTLLEKRKGLEDKKAKLNGRVTAMPKTQQEIVRLTRDVESGQQVYMQLLNKQQELKITEASTVGNVRIVDPAITQPGVLKPKKALIILGSIILGLMLSIVGVLLRSLFNRGIESPQALEEHGISVYASIPLSEWQKARDSVKTIKGIKRYKQSQLLAVGNPTDLAIEAIRSLRTSLHFAMMQAQNNVLMLTGVSSSIGKTFVCANLAAVISQTHKRVLLIDCDMRKGYTHELLGTNNVDGLSDILAGKGEIASCAKPTAIANFDLIPRGQVPPNPSELLMSERFGELIAWASSRYDLVLIDTPPILAVTDAAIVGRHVGTTLMVARYAVNTLKEVETSLSRFDQNGIQVKGVILNSIFRRATGYQDYGYYEYEYQSDSK.

Residues 1 to 30 (MTEKVKQSAAVTGSDEIDIGRLVGTVIEAR) lie on the Cytoplasmic side of the membrane. Residues 31-51 (WWVLGTTAIFALCAVIYTFFA) form a helical membrane-spanning segment. The Periplasmic segment spans residues 52–423 (TPIYSADALV…TQPGVLKPKK (372 aa)). Residues 424 to 444 (ALIILGSIILGLMLSIVGVLL) form a helical membrane-spanning segment. The Cytoplasmic segment spans residues 445–719 (RSLFNRGIES…YEYEYQSDSK (275 aa)). The residue at position 568 (Y568) is a Phosphotyrosine; by autocatalysis. A phosphotyrosine mark is found at Y707, Y709, Y710, Y712, and Y714.

Belongs to the etk/wzc family. Autophosphorylated. Seems to be phosphorylated through a cooperative two-step mechanism. First, Tyr-568 is phosphorylated in an intramolecular reaction that generates a significant increase of protein kinase activity. Then Tyr-707, Tyr-709, Tyr-710, Tyr-712 and Tyr-714 are phosphorylated in an intermolecular Tyr-568-dependent reaction.

Its subcellular location is the cell inner membrane. It catalyses the reaction L-tyrosyl-[protein] + ATP = O-phospho-L-tyrosyl-[protein] + ADP + H(+). Its pathway is glycan metabolism; exopolysaccharide biosynthesis. With respect to regulation, dephosphorylated and activated by wzb. Functionally, required for the extracellular polysaccharide colanic acid synthesis. The autophosphorylated form is inactive. Probably involved in the export of colanic acid from the cell to medium. The protein is Tyrosine-protein kinase wzc (wzc) of Salmonella typhi.